The following is a 176-amino-acid chain: Small ribosomal subunit protein uS8c (176 aa).

The protein belongs to the universal ribosomal protein uS8 family. In terms of assembly, part of the 30S ribosomal subunit.

The protein localises to the plastid. It is found in the chloroplast. One of the primary rRNA binding proteins, it binds directly to 16S rRNA central domain where it helps coordinate assembly of the platform of the 30S subunit. In Stigeoclonium helveticum (Green alga), this protein is Small ribosomal subunit protein uS8c (rps8).